The sequence spans 543 residues: Alanine aminotransferase 1, mitochondrial (543 aa).

The transit peptide at 1 to 55 directs the protein to the mitochondrion; it reads MRRFVIGQAKNLIDQSRRRQLHHHKNLSFVSLIPPFSAPSDSSSRHLSSSSSSDM. Residues 43 to 63 are compositionally biased toward low complexity; sequence SSRHLSSSSSSDMSASDSSSS. The tract at residues 43–64 is disordered; sequence SSRHLSSSSSSDMSASDSSSSL. An N-acetylserine modification is found at Ser56. Pyridoxal 5'-phosphate is bound by residues Tyr173, 209 to 210, Tyr235, Asn291, Tyr322, and 354 to 356; these read AS and SFQ. Residue Lys360 is modified to N6-(pyridoxal phosphate)lysine. The pyridoxal 5'-phosphate site is built by Arg369 and Asn397.

This sequence belongs to the class-I pyridoxal-phosphate-dependent aminotransferase family. Alanine aminotransferase subfamily. Homodimer. The cofactor is pyridoxal 5'-phosphate. In terms of processing, the N-terminus is blocked. Mostly expressed in roots and shoots, mostly in vascular tissues, and, to a lower extent, in flowers and leaves.

It is found in the mitochondrion. It catalyses the reaction L-alanine + 2-oxoglutarate = pyruvate + L-glutamate. Its pathway is photosynthesis; C4 acid pathway. It functions in the pathway amino-acid degradation; L-alanine degradation via transaminase pathway; pyruvate from L-alanine: step 1/1. In terms of biological role, is the major alanine aminotransferase in roots that catalyzes the conversion of alanine to pyruvate. Involved in the rapid conversion of alanine to pyruvate during recovery from low-oxygen stress. The protein is Alanine aminotransferase 1, mitochondrial of Arabidopsis thaliana (Mouse-ear cress).